A 148-amino-acid chain; its full sequence is Large ribosomal subunit protein bL9 (148 aa).

This sequence belongs to the bacterial ribosomal protein bL9 family.

In terms of biological role, binds to the 23S rRNA. The chain is Large ribosomal subunit protein bL9 from Frankia casuarinae (strain DSM 45818 / CECT 9043 / HFP020203 / CcI3).